A 256-amino-acid chain; its full sequence is Minor capsid protein P7 (256 aa).

2 hydrophobic regions span residues 24–44 (LLFASTWLYINNYILLSIIMK) and 47–67 (TKHMILLGFVAVVVVFIIFML). 3 disulfide bridges follow: Cys-120/Cys-134, Cys-156/Cys-172, and Cys-188/Cys-211.

Interacts with the major capsid protein. Post-translationally, stabilized by 3 intramolecular disulfide bonds.

It localises to the virion. In terms of biological role, one of the minor capsid proteins that constitute a network internal to the major capsid proteins and outside the lipid membrane. The minor capsid proteins glue and stabilize the capsomers. The protein is Minor capsid protein P7 of Paramecium bursaria Chlorella virus 1 (PBCV-1).